The primary structure comprises 151 residues: Ubiquitin-conjugating enzyme E2 2 (151 aa).

The UBC core domain maps to 4 to 150 (AARRRLMRDF…VRETVERSWE (147 aa)). The active-site Glycyl thioester intermediate is cysteine 88.

Belongs to the ubiquitin-conjugating enzyme family.

It is found in the cytoplasm. The protein resides in the nucleus. It carries out the reaction S-ubiquitinyl-[E1 ubiquitin-activating enzyme]-L-cysteine + [E2 ubiquitin-conjugating enzyme]-L-cysteine = [E1 ubiquitin-activating enzyme]-L-cysteine + S-ubiquitinyl-[E2 ubiquitin-conjugating enzyme]-L-cysteine.. The protein operates within protein modification; protein ubiquitination. Catalyzes the covalent attachment of ubiquitin to other proteins. Plays a role in transcription regulation by catalyzing the monoubiquitination of histone H2B to form H2BK123ub1. H2BK123ub1 gives a specific tag for epigenetic transcriptional activation and is also a prerequisite for H3K4me and H3K79me formation. Also involved in postreplication repair of UV-damaged DNA, in N-end rule-dependent protein degradation and in sporulation. In Trichoderma harzianum (Hypocrea lixii), this protein is Ubiquitin-conjugating enzyme E2 2 (UBC2).